The sequence spans 187 residues: Peptidyl-tRNA hydrolase (187 aa).

Tyr16 lines the tRNA pocket. His21 serves as the catalytic Proton acceptor. Residues Tyr66, Asn68, and Asn114 each contribute to the tRNA site.

The protein belongs to the PTH family. As to quaternary structure, monomer.

Its subcellular location is the cytoplasm. The enzyme catalyses an N-acyl-L-alpha-aminoacyl-tRNA + H2O = an N-acyl-L-amino acid + a tRNA + H(+). In terms of biological role, hydrolyzes ribosome-free peptidyl-tRNAs (with 1 or more amino acids incorporated), which drop off the ribosome during protein synthesis, or as a result of ribosome stalling. Functionally, catalyzes the release of premature peptidyl moieties from peptidyl-tRNA molecules trapped in stalled 50S ribosomal subunits, and thus maintains levels of free tRNAs and 50S ribosomes. The chain is Peptidyl-tRNA hydrolase from Malacoplasma penetrans (strain HF-2) (Mycoplasma penetrans).